Consider the following 404-residue polypeptide: Multidrug resistance protein MdtG (404 aa).

Transmembrane regions (helical) follow at residues Leu-19 to Val-39, Leu-56 to Ala-76, Leu-90 to Ile-110, Ala-113 to Ala-133, Thr-144 to Ala-164, Pro-171 to Ile-191, Leu-222 to Leu-242, Ile-254 to Pro-274, Ile-288 to Thr-308, Phe-317 to Asn-337, and Ala-376 to Leu-396.

This sequence belongs to the major facilitator superfamily. DHA1 family. MdtG (TC 2.A.1.2.20) subfamily.

The protein resides in the cell inner membrane. The chain is Multidrug resistance protein MdtG from Salmonella paratyphi A (strain ATCC 9150 / SARB42).